Reading from the N-terminus, the 876-residue chain is Bifunctional uridylyltransferase/uridylyl-removing enzyme (876 aa).

The interval 1–332 (MPYQSPITFQ…NNGEEAEAVI (332 aa)) is uridylyltransferase. Residues 333–692 (IDDDFQRRGN…LSKKATRGGT (360 aa)) are uridylyl-removing. Positions 451–573 (VDEHSIRLLK…VRDEERLEYL (123 aa)) constitute an HD domain. 2 ACT domains span residues 693 to 777 (EVFI…RIPR) and 800 to 876 (LMEF…PSAQ).

Belongs to the GlnD family. It depends on Mg(2+) as a cofactor.

The catalysed reaction is [protein-PII]-L-tyrosine + UTP = [protein-PII]-uridylyl-L-tyrosine + diphosphate. It carries out the reaction [protein-PII]-uridylyl-L-tyrosine + H2O = [protein-PII]-L-tyrosine + UMP + H(+). Its activity is regulated as follows. Uridylyltransferase (UTase) activity is inhibited by glutamine, while glutamine activates uridylyl-removing (UR) activity. In terms of biological role, modifies, by uridylylation and deuridylylation, the PII regulatory proteins (GlnB and homologs), in response to the nitrogen status of the cell that GlnD senses through the glutamine level. Under low glutamine levels, catalyzes the conversion of the PII proteins and UTP to PII-UMP and PPi, while under higher glutamine levels, GlnD hydrolyzes PII-UMP to PII and UMP (deuridylylation). Thus, controls uridylylation state and activity of the PII proteins, and plays an important role in the regulation of nitrogen assimilation and metabolism. The protein is Bifunctional uridylyltransferase/uridylyl-removing enzyme of Vibrio cholerae serotype O1 (strain ATCC 39315 / El Tor Inaba N16961).